The sequence spans 943 residues: Protein translocase subunit SecA (943 aa).

ATP-binding positions include glutamine 90, 108–112, and aspartate 509; that span reads GEGKT. The interval 535–564 is disordered; that stretch reads PDNEHKPPIPKQRNSKSKGGFSKKASSKLK.

It belongs to the SecA family. As to quaternary structure, monomer and homodimer. Part of the essential Sec protein translocation apparatus which comprises SecA, SecYEG and auxiliary proteins SecDF. Other proteins may also be involved.

The protein localises to the cell inner membrane. It is found in the cellular thylakoid membrane. The protein resides in the cytoplasm. The enzyme catalyses ATP + H2O + cellular proteinSide 1 = ADP + phosphate + cellular proteinSide 2.. Part of the Sec protein translocase complex. Interacts with the SecYEG preprotein conducting channel. Has a central role in coupling the hydrolysis of ATP to the transfer of proteins into and across the cell membrane, serving as an ATP-driven molecular motor driving the stepwise translocation of polypeptide chains across the membrane. In terms of biological role, probably participates in protein translocation into and across both the cytoplasmic and thylakoid membranes in cyanobacterial cells. This is Protein translocase subunit SecA from Prochlorococcus marinus (strain MIT 9215).